A 452-amino-acid chain; its full sequence is Trigger factor (452 aa).

Residues 170 to 255 (GDRVTIDFTG…VKSVAAPGPL (86 aa)) enclose the PPIase FKBP-type domain.

It belongs to the FKBP-type PPIase family. Tig subfamily.

It localises to the cytoplasm. It catalyses the reaction [protein]-peptidylproline (omega=180) = [protein]-peptidylproline (omega=0). In terms of biological role, involved in protein export. Acts as a chaperone by maintaining the newly synthesized protein in an open conformation. Functions as a peptidyl-prolyl cis-trans isomerase. This Xanthobacter autotrophicus (strain ATCC BAA-1158 / Py2) protein is Trigger factor.